The primary structure comprises 79 residues: Probable [Fe-S]-dependent transcriptional repressor (79 aa).

Iron-sulfur cluster-binding residues include Cys-56, Cys-61, Cys-64, and Cys-71.

The protein belongs to the FeoC family.

May function as a transcriptional regulator that controls feoABC expression. The polypeptide is Probable [Fe-S]-dependent transcriptional repressor (Klebsiella pneumoniae (strain 342)).